Reading from the N-terminus, the 104-residue chain is uncharacterized protein (104 aa).

2 helical membrane passes run 16 to 36 (LAFF…LASY) and 44 to 64 (GGFG…FLCI).

The protein localises to the cell membrane. This is an uncharacterized protein from Bacillus anthracis.